Consider the following 412-residue polypeptide: uncharacterized protein (412 aa).

Residue His-49 coordinates Zn(2+). Glu-52 serves as the catalytic Proton acceptor. Zn(2+)-binding residues include His-53 and Glu-129.

It belongs to the peptidase M16 family. Requires Zn(2+) as cofactor.

This is an uncharacterized protein from Rickettsia bellii (strain RML369-C).